The primary structure comprises 650 residues: Threonine--tRNA ligase (650 aa).

Positions 3 to 65 (DLVKVTLPDG…ERDARLEIVT (63 aa)) constitute a TGS domain. A catalytic region spans residues 248-548 (DHRRLGPQLG…LVEHYAGAFP (301 aa)). Zn(2+) is bound by residues cysteine 349, histidine 400, and histidine 525.

The protein belongs to the class-II aminoacyl-tRNA synthetase family. Homodimer. Zn(2+) is required as a cofactor.

It is found in the cytoplasm. It catalyses the reaction tRNA(Thr) + L-threonine + ATP = L-threonyl-tRNA(Thr) + AMP + diphosphate + H(+). Functionally, catalyzes the attachment of threonine to tRNA(Thr) in a two-step reaction: L-threonine is first activated by ATP to form Thr-AMP and then transferred to the acceptor end of tRNA(Thr). Also edits incorrectly charged L-seryl-tRNA(Thr). The sequence is that of Threonine--tRNA ligase from Anaeromyxobacter dehalogenans (strain 2CP-1 / ATCC BAA-258).